The following is a 331-amino-acid chain: Phenylalanine--tRNA ligase alpha subunit (331 aa).

Position 252 (E252) interacts with Mg(2+).

This sequence belongs to the class-II aminoacyl-tRNA synthetase family. Phe-tRNA synthetase alpha subunit type 1 subfamily. In terms of assembly, tetramer of two alpha and two beta subunits. Mg(2+) is required as a cofactor.

It localises to the cytoplasm. The catalysed reaction is tRNA(Phe) + L-phenylalanine + ATP = L-phenylalanyl-tRNA(Phe) + AMP + diphosphate + H(+). The chain is Phenylalanine--tRNA ligase alpha subunit from Marinomonas sp. (strain MWYL1).